Consider the following 245-residue polypeptide: MIIPALDLIDGTVVRLHQGDYARQRDYGNDPLPRLQDYAAQGAGVLHLVDLTGAKDPAKRQIPLIKTLVAGVNVPVQVGGGVRTEEDVAALLKAGVARVVIGSTAVKSPDVVKGWFERFGAQALVLALDVRIDEHGTKQVAVSGWQENSGVSLEQLVETYLPVGLKHVLCTDISRDGTLAGSNVSLYEEVCARYPQIAFQSSGGIGDIDDIAALRGTGVRGVIVGRALLEGKFTVKEAIQCWQNV.

The active-site Proton acceptor is the Asp-7. The active-site Proton donor is the Asp-129.

It belongs to the HisA/HisF family.

It is found in the cytoplasm. The catalysed reaction is 1-(5-phospho-beta-D-ribosyl)-5-[(5-phospho-beta-D-ribosylamino)methylideneamino]imidazole-4-carboxamide = 5-[(5-phospho-1-deoxy-D-ribulos-1-ylimino)methylamino]-1-(5-phospho-beta-D-ribosyl)imidazole-4-carboxamide. The protein operates within amino-acid biosynthesis; L-histidine biosynthesis; L-histidine from 5-phospho-alpha-D-ribose 1-diphosphate: step 4/9. This chain is 1-(5-phosphoribosyl)-5-[(5-phosphoribosylamino)methylideneamino] imidazole-4-carboxamide isomerase, found in Salmonella heidelberg (strain SL476).